The primary structure comprises 494 residues: Argininosuccinate lyase (494 aa).

The protein belongs to the lyase 1 family. Argininosuccinate lyase subfamily.

The protein resides in the cytoplasm. It catalyses the reaction 2-(N(omega)-L-arginino)succinate = fumarate + L-arginine. It functions in the pathway amino-acid biosynthesis; L-arginine biosynthesis; L-arginine from L-ornithine and carbamoyl phosphate: step 3/3. The chain is Argininosuccinate lyase from Methanosphaerula palustris (strain ATCC BAA-1556 / DSM 19958 / E1-9c).